The sequence spans 464 residues: D-2-hydroxyglutarate dehydrogenase (464 aa).

One can recognise an FAD-binding PCMH-type domain in the interval 37-216 (FAPAPSAIVF…VEATMRLERQ (180 aa)). The (R)-2-hydroxyglutarate site is built by Arg-325, Ser-329, and Lys-339. Arg-325, Ser-329, and Lys-339 together coordinate (R)-malate. Positions 374 and 381 each coordinate Zn(2+). (R)-2-hydroxyglutarate is bound at residue Asn-383. Glu-420 is a binding site for Zn(2+). Residue His-421 coordinates (R)-2-hydroxyglutarate. (R)-malate is bound at residue His-421.

Belongs to the FAD-binding oxidoreductase/transferase type 4 family. Homodimer. It depends on FAD as a cofactor.

The enzyme catalyses (R)-2-hydroxyglutarate + A = 2-oxoglutarate + AH2. It carries out the reaction (R)-malate + A = oxaloacetate + AH2. Activated by Zn(2+) ions at low concentrations (10 uM) and inhibited by Zn(2+), Fe(2+) and Ni(2+) at high concentrations (10 mM). Functionally, catalyzes the dehydrogenation of (R)-2-hydroxyglutarate (D-2-hydroxyglutarate or D-2-HG) to 2-oxoglutarate and of (R)-malate (D-malate) to oxaloacetate. Is functionally tied to L-serine biosynthesis, via its coupling with the D-3-phosphoglycerate dehydrogenase SerA, encoded by the adjacent gene in the locus. Is required for the utilization of D-2-hydroxyglutarate as well as D-malate as the sole carbon source for growth of P.stutzeri. Active in vitro with artificial electron acceptors such as 2,6-dichlorophenolindophenol (DCPIP) and appears to couple with electron transfer flavoprotein (ETF) for efficient oxidation of both D-2-hydroxyglutarate and D-malate in vivo. Cannot catalyze the oxidation of L-2-hydroxyglutarate, D-lactate, D-tartrate, D-2-hydroxybutanoate, D-mandelate, D-glycerate and D-phenyllactate. This is D-2-hydroxyglutarate dehydrogenase from Stutzerimonas stutzeri (strain A1501) (Pseudomonas stutzeri).